Reading from the N-terminus, the 691-residue chain is Hormonally up-regulated neu tumor-associated kinase homolog A (691 aa).

Residues 55–313 (YLIGRKLGEG…IQQALANRWL (259 aa)) form the Protein kinase domain. Residues 61–69 (LGEGSFAKV) and lysine 84 each bind ATP. Aspartate 179 functions as the Proton acceptor in the catalytic mechanism. A compositionally biased stretch (basic and acidic residues) spans 406–425 (MNKNSYEERRSKDLEKRGEP). Disordered regions lie at residues 406 to 475 (MNKN…GGLS), 499 to 518 (QSPDPRTPKIMRRQDSHSQE), 580 to 640 (FQFD…SRGR), and 655 to 679 (QVVSPKGEKPLETRMPPLHQMSPGY). A compositionally biased stretch (polar residues) spans 440 to 453 (SHRQNACLTPQGHS). The segment covering 457 to 470 (PVKERRSSKSERES) has biased composition (basic and acidic residues). Over residues 582 to 597 (FDNTSPSKSHFNQASF) the composition is skewed to polar residues. Residues 604–620 (SPSSPESMSPTSPHSPS) are compositionally biased toward low complexity. Over residues 621–631 (CNNNISGNLGS) the composition is skewed to polar residues.

The protein belongs to the protein kinase superfamily. CAMK Ser/Thr protein kinase family. SNF1 subfamily.

The enzyme catalyses L-seryl-[protein] + ATP = O-phospho-L-seryl-[protein] + ADP + H(+). It catalyses the reaction L-threonyl-[protein] + ATP = O-phospho-L-threonyl-[protein] + ADP + H(+). This is Hormonally up-regulated neu tumor-associated kinase homolog A (hunk-a) from Xenopus laevis (African clawed frog).